Consider the following 425-residue polypeptide: Protein translocase subunit SecY (425 aa).

A run of 10 helical transmembrane segments spans residues 15–35, 62–82, 113–131, 139–159, 168–188, 201–221, 266–286, 304–324, 364–384, and 385–405; these read LLSL…VPGI, TVVV…SIIM, LLTL…FYLK, LVLA…VLWL, LGNG…PGFV, IGSW…IVLL, PIIL…LGLL, IIYW…YSTI, LLGA…QAIL, and SLSG…GVIL.

The protein belongs to the SecY/SEC61-alpha family. As to quaternary structure, component of the plastid Sec protein translocase complex, which is composed of at least SecY, SecE and SecG.

It localises to the plastid. It is found in the chloroplast thylakoid membrane. Functionally, the central subunit of the protein translocation channel SecYE. Consists of two halves formed by TMs 1-5 and 6-10. These two domains form a lateral gate at the front which open onto the bilayer between TMs 2 and 7, and are clamped together by SecE at the back. The channel is closed by both a pore ring composed of hydrophobic SecY resides and a short helix (helix 2A) on the extracellular side of the membrane which forms a plug. In Trieres chinensis (Marine centric diatom), this protein is Protein translocase subunit SecY.